The chain runs to 849 residues: Envelope glycoprotein gp160 (849 aa).

The N-terminal stretch at 1–31 is a signal peptide; sequence MRVKGIQRNWQHLWKWGTLILGLVIICSASD. The Extracellular segment spans residues 32–670; it reads NLWVTVYYGV…ISNWLWYIRI (639 aa). C53 and C73 form a disulfide bridge. 17 N-linked (GlcNAc...) asparagine; by host glycosylation sites follow: N87, N129, N137, N142, N153, N185, N195, N232, N239, N260, N274, N287, N299, N329, N341, N354, and N358. Intrachain disulfides connect C118–C203, C125–C194, C130–C154, C216–C245, and C226–C237. A V1 region spans residues 130–153; the sequence is CTNVNSANHTEANNTVENKEEIKN. The V2 stretch occupies residues 154-194; that stretch reads CSFKITTERGGKKKEEYALFYKLDVVPISNGNKTSYRLIHC. Positions 294-327 are V3; that stretch reads CIRPNNNTRKSIPIGPGQAFYATGDIIGDIRQAH. Cysteines 294 and 328 form a disulfide. The segment at 360 to 370 is CD4-binding loop; that stretch reads SAGGDLEITTH. 2 cysteine pairs are disulfide-bonded: C374–C430 and C381–C403. Residues 381–403 form a V4 region; the sequence is CNTSGLFNNNISNINNETITLPC. N-linked (GlcNAc...) asparagine; by host glycosylation is found at N382, N390, N396, N433, and N447. 2 V5 regions span residues 446–457 and 448–457; these read NNDSTEETFRPG and DSTEETFRPG. Positions 498–518 are fusion peptide; sequence AVGLGAVFLGFLGAAGSTMGA. An immunosuppression region spans residues 560–578; that stretch reads KQLQSRVLAIERYLKDQQL. The cysteines at positions 584 and 590 are disulfide-linked. N-linked (GlcNAc...) asparagine; by host glycosylation is found at N597, N602, N611, and N623. Residues 619–653 adopt a coiled-coil conformation; that stretch reads REIHNYTQHIYSLIEESQNQQEKNEQDLLALDKWA. An MPER; binding to GalCer region spans residues 648–669; the sequence is ALDKWASLWNWFDISNWLWYIR. The chain crosses the membrane as a helical span at residues 671–691; sequence FIMIVGGLIGLRIVFAVLSIV. At 692-849 the chain is on the cytoplasmic side; that stretch reads NRVRQGYSPL…IRQGLERALL (158 aa). A YXXL motif; contains endocytosis signal motif is present at residues 698–701; that stretch reads YSPL. The tract at residues 709-729 is disordered; the sequence is HQREPDRLGKTEEGGGEQDRD. A lipid anchor (S-palmitoyl cysteine; by host) is attached at C750. The Di-leucine internalization motif motif lies at 848-849; it reads LL.

It belongs to the HIV-1 env protein family. In terms of assembly, the mature envelope protein (Env) consists of a homotrimer of non-covalently associated gp120-gp41 heterodimers. The resulting complex protrudes from the virus surface as a spike. There seems to be as few as 10 spikes on the average virion. Interacts with host CD4, CCR5 and CXCR4. Gp120 also interacts with the C-type lectins CD209/DC-SIGN and CLEC4M/DC-SIGNR (collectively referred to as DC-SIGN(R)). Gp120 and gp41 interact with GalCer. Gp120 interacts with host ITGA4/ITGB7 complex; on CD4+ T-cells, this interaction results in rapid activation of integrin ITGAL/LFA-1, which facilitates efficient cell-to-cell spreading of HIV-1. Gp120 interacts with cell-associated heparan sulfate; this interaction increases virus infectivity on permissive cells and may be involved in infection of CD4- cells. The mature envelope protein (Env) consists of a homotrimer of non-covalently associated gp120-gp41 heterodimers. The resulting complex protrudes from the virus surface as a spike. There seems to be as few as 10 spikes on the average virion. Highly glycosylated by host. The high number of glycan on the protein is reffered to as 'glycan shield' because it contributes to hide protein sequence from adaptive immune system. Post-translationally, palmitoylation of the transmembrane protein and of Env polyprotein (prior to its proteolytic cleavage) is essential for their association with host cell membrane lipid rafts. Palmitoylation is therefore required for envelope trafficking to classical lipid rafts, but not for viral replication. In terms of processing, specific enzymatic cleavages in vivo yield mature proteins. Envelope glycoproteins are synthesized as an inactive precursor that is heavily N-glycosylated and processed likely by host cell furin in the Golgi to yield the mature SU and TM proteins. The cleavage site between SU and TM requires the minimal sequence [KR]-X-[KR]-R. About 2 of the 9 disulfide bonds of gp41 are reduced by P4HB/PDI, following binding to CD4 receptor.

It localises to the virion membrane. It is found in the host cell membrane. The protein localises to the host endosome membrane. Functionally, oligomerizes in the host endoplasmic reticulum into predominantly trimers. In a second time, gp160 transits in the host Golgi, where glycosylation is completed. The precursor is then proteolytically cleaved in the trans-Golgi and thereby activated by cellular furin or furin-like proteases to produce gp120 and gp41. Its function is as follows. Attaches the virus to the host lymphoid cell by binding to the primary receptor CD4. This interaction induces a structural rearrangement creating a high affinity binding site for a chemokine coreceptor like CXCR4 and/or CCR5. Acts as a ligand for CD209/DC-SIGN and CLEC4M/DC-SIGNR, which are respectively found on dendritic cells (DCs), and on endothelial cells of liver sinusoids and lymph node sinuses. These interactions allow capture of viral particles at mucosal surfaces by these cells and subsequent transmission to permissive cells. HIV subverts the migration properties of dendritic cells to gain access to CD4+ T-cells in lymph nodes. Virus transmission to permissive T-cells occurs either in trans (without DCs infection, through viral capture and transmission), or in cis (following DCs productive infection, through the usual CD4-gp120 interaction), thereby inducing a robust infection. In trans infection, bound virions remain infectious over days and it is proposed that they are not degraded, but protected in non-lysosomal acidic organelles within the DCs close to the cell membrane thus contributing to the viral infectious potential during DCs' migration from the periphery to the lymphoid tissues. On arrival at lymphoid tissues, intact virions recycle back to DCs' cell surface allowing virus transmission to CD4+ T-cells. In terms of biological role, acts as a class I viral fusion protein. Under the current model, the protein has at least 3 conformational states: pre-fusion native state, pre-hairpin intermediate state, and post-fusion hairpin state. During fusion of viral and target intracellular membranes, the coiled coil regions (heptad repeats) assume a trimer-of-hairpins structure, positioning the fusion peptide in close proximity to the C-terminal region of the ectodomain. The formation of this structure appears to drive apposition and subsequent fusion of viral and target cell membranes. Complete fusion occurs in host cell endosomes and is dynamin-dependent, however some lipid transfer might occur at the plasma membrane. The virus undergoes clathrin-dependent internalization long before endosomal fusion, thus minimizing the surface exposure of conserved viral epitopes during fusion and reducing the efficacy of inhibitors targeting these epitopes. Membranes fusion leads to delivery of the nucleocapsid into the cytoplasm. The sequence is that of Envelope glycoprotein gp160 from Human immunodeficiency virus type 1 group M subtype G (isolate 92NG083) (HIV-1).